A 328-amino-acid chain; its full sequence is Transcription initiation factor IIB 4 (328 aa).

Composition is skewed to basic and acidic residues over residues 1 to 12 and 21 to 32; these read MTNQRTTRDGSH and RSRESTDEDHGC. Residues 1 to 47 are disordered; it reads MTNQRTTRDGSHGTESVPTQRSRESTDEDHGCPECNGDLVTDEDRGE. The segment at 28-58 adopts a TFIIB-type zinc-finger fold; it reads EDHGCPECNGDLVTDEDRGETTCGECGLVVE. Zn(2+) contacts are provided by cysteine 32, cysteine 35, cysteine 50, and cysteine 53. 2 consecutive repeat copies span residues 144-227 and 238-319.

Belongs to the TFIIB family.

Its function is as follows. Stabilizes TBP binding to an archaeal box-A promoter. Also responsible for recruiting RNA polymerase II to the pre-initiation complex (DNA-TBP-TFIIB). This is Transcription initiation factor IIB 4 from Halobacterium salinarum (strain ATCC 700922 / JCM 11081 / NRC-1) (Halobacterium halobium).